Reading from the N-terminus, the 369-residue chain is Type 2 DNA topoisomerase 6 subunit A (369 aa).

Residues 11–149 (KGDALAREKL…FHMRPEEDGA (139 aa)) form the Topo IIA-type catalytic domain. Catalysis depends on Tyr106, which acts as the O-(5'-phospho-DNA)-tyrosine intermediate. The Mg(2+) site is built by Glu202 and Asp254.

The protein belongs to the TOP6A family. As to quaternary structure, homodimer. Heterotetramer of two Top6A and two Top6B chains. Mg(2+) serves as cofactor.

It carries out the reaction ATP-dependent breakage, passage and rejoining of double-stranded DNA.. Its function is as follows. Relaxes both positive and negative superturns and exhibits a strong decatenase activity. The polypeptide is Type 2 DNA topoisomerase 6 subunit A (Methanosarcina mazei (strain ATCC BAA-159 / DSM 3647 / Goe1 / Go1 / JCM 11833 / OCM 88) (Methanosarcina frisia)).